Consider the following 328-residue polypeptide: Cell cycle control protein 50A (328 aa).

The interval 1–28 (MAMNYSAKDEVDGGPTGPPGGAAKTRRP) is disordered. An N-acetylalanine modification is found at A2. The tract at residues 2-48 (AMNYSAKDEVDGGPTGPPGGAAKTRRPDNTAFKQQRLPAWQPILTAG) is required for ATPase and aminophospholipid flippase activity. At 2 to 49 (AMNYSAKDEVDGGPTGPPGGAAKTRRPDNTAFKQQRLPAWQPILTAGT) the chain is on the cytoplasmic side. Positions 49-315 (TVLPTFFIIG…LGVVLLVINH (267 aa)) are interaction with ATP8A2. Residues 50-70 (VLPTFFIIGLIFIPIGIGIFV) traverse the membrane as a helical segment. Residues 71–292 (TSNNIREIEG…SWMGGKNPFL (222 aa)) lie on the Exoplasmic loop side of the membrane. Residues 102–125 (RDDSQLNGDPSALLNPSKECEPYR) form a disordered region. A disulfide bond links C121 and C135. 2 N-linked (GlcNAc...) asparagine glycosylation sites follow: N144 and N261. Residues 293 to 313 (GIAYITIGSISFLLGVVLLVI) traverse the membrane as a helical segment. Topologically, residues 314–328 (NHKYRNSSNTADITI) are cytoplasmic.

It belongs to the CDC50/LEM3 family. As to quaternary structure, component of various P4-ATPase flippase complexes which consists of a catalytic alpha subunit and an accessory beta subunit. Interacts with ATP8A1 to form a flippase complex; this complex forms an intermediate phosphoenzyme. Interacts with ATP8A2 to form a flippase complex. TP8B1:TMEM30A and ATP8B2:TMEM30A flippase complexes have been shown to form intermediate phosphoenzymes in vitro. Interacts with alpha subunits ATP8A1, ATP8B1, ATP8B2, ATP8B4, ATP10A, ATP10B, ATP10D, ATP11A, ATP11B and ATP11C. N-glycosylated. Contains high mannose-type oligosaccharides.

Its subcellular location is the membrane. The protein resides in the golgi apparatus. The protein localises to the cytoplasmic vesicle. It localises to the secretory vesicle membrane. It is found in the apical cell membrane. Its subcellular location is the photoreceptor inner segment. The protein resides in the cell projection. The protein localises to the cilium. It localises to the photoreceptor outer segment. In terms of biological role, accessory component of a P4-ATPase flippase complex which catalyzes the hydrolysis of ATP coupled to the transport of aminophospholipids from the outer to the inner leaflet of various membranes and ensures the maintenance of asymmetric distribution of phospholipids. Phospholipid translocation also seems to be implicated in vesicle formation and in uptake of lipid signaling molecules. The beta subunit may assist in binding of the phospholipid substrate. Required for the proper folding, assembly and ER to Golgi exit of the ATP8A2:TMEM30A flippase complex. ATP8A2:TMEM30A may be involved in regulation of neurite outgrowth, and, reconstituted to liposomes, predomiminantly transports phosphatidylserine (PS) and to a lesser extent phosphatidylethanolamine (PE). The ATP8A1:TMEM30A flippase complex seems to play a role in regulation of cell migration probably involving flippase-mediated translocation of phosphatidylethanolamine (PE) at the plasma membrane. Required for the formation of the ATP8A2, ATP8B1 and ATP8B2 P-type ATPAse intermediate phosphoenzymes. Involved in uptake of platelet-activating factor (PAF). Can also mediate the export of alpha subunits ATP8A1, ATP8B1, ATP8B2, ATP8B4, ATP10A, ATP10B, ATP10D, ATP11A, ATP11B and ATP11C from ER to other membrane localizations. In Rattus norvegicus (Rat), this protein is Cell cycle control protein 50A.